The chain runs to 245 residues: Protein crossbronx (245 aa).

The UBC core domain maps to 20–177 (HQEYKILAEY…VQESIAESKA (158 aa)).

The protein belongs to the ubiquitin-conjugating enzyme family. FTS subfamily.

This is Protein crossbronx (cbx) from Drosophila mojavensis (Fruit fly).